A 220-amino-acid polypeptide reads, in one-letter code: Kinetochore protein Spc25 (220 aa).

Residues 41-119 (ILLDVKEAAA…NEIMERIHTL (79 aa)) are a coiled coil.

Belongs to the SPC25 family. As to quaternary structure, component of the Ndc80 complex, which is composed of Ndc80, Nuf2 and Spc25.

The protein resides in the nucleus. It localises to the chromosome. It is found in the centromere. Its subcellular location is the kinetochore. Its function is as follows. Acts as a component of the essential kinetochore-associated Ndc80 complex, which is required for chromosome segregation and spindle checkpoint activity during meiosis and mitosis. Required for kinetochore integrity and the organization of stable microtubule binding sites in the outer plate of the kinetochore. Participates in SAC signaling that responds specifically to disruptions in spindle microtubule dynamics. The NDC80 complex synergistically enhances the affinity of the SKA1 complex for microtubules and may allow the NDC80 complex to track depolymerizing microtubules. In Drosophila erecta (Fruit fly), this protein is Kinetochore protein Spc25.